Here is a 362-residue protein sequence, read N- to C-terminus: Chorismate synthase (362 aa).

Arg46 lines the NADP(+) pocket. Residues 121–123, 237–238, Gly277, 292–296, and Arg318 contribute to the FMN site; these read RAS, NA, and KPTPS.

It belongs to the chorismate synthase family. As to quaternary structure, homotetramer. The cofactor is FMNH2.

The enzyme catalyses 5-O-(1-carboxyvinyl)-3-phosphoshikimate = chorismate + phosphate. The protein operates within metabolic intermediate biosynthesis; chorismate biosynthesis; chorismate from D-erythrose 4-phosphate and phosphoenolpyruvate: step 7/7. Functionally, catalyzes the anti-1,4-elimination of the C-3 phosphate and the C-6 proR hydrogen from 5-enolpyruvylshikimate-3-phosphate (EPSP) to yield chorismate, which is the branch point compound that serves as the starting substrate for the three terminal pathways of aromatic amino acid biosynthesis. This reaction introduces a second double bond into the aromatic ring system. The chain is Chorismate synthase from Campylobacter lari (strain RM2100 / D67 / ATCC BAA-1060).